We begin with the raw amino-acid sequence, 651 residues long: Tudor domain-containing protein 3 (651 aa).

One can recognise a UBA domain in the interval 193–233 (LVDEKALKHITEMGFSKEASRQALMDNGNNLEAALNVLLTS). Disordered regions lie at residues 234–271 (NKQK…SAPS), 287–369 (EEPK…VSEV), and 381–450 (YSRY…TSIP). Ser-256 is subject to Phosphoserine. Residues 291-312 (SQPQQLHQGQYRSSNTEQNGVK) are compositionally biased toward polar residues. Residues 313–338 (DNNHLRHPPRNDTRQPRNEKPPRFQR) show a composition bias toward basic and acidic residues. The residue at position 345 (Ser-345) is a Phosphoserine. A Glycyl lysine isopeptide (Lys-Gly) (interchain with G-Cter in SUMO2) cross-link involves residue Lys-470. The region spanning 555–615 (MWKPGDECFA…KPIQTEAWEE (61 aa)) is the Tudor domain. Basic and acidic residues predominate over residues 624–633 (EFRRGGDGQP). Positions 624–651 (EFRRGGDGQPRRSTRPTQQFYQPPRARN) are disordered. The interval 631-651 (GQPRRSTRPTQQFYQPPRARN) is EBM motif; may mediate interaction with the EJC.

As to quaternary structure, component of mRNA stress granules. Interacts with FMR1, FXR1, FXR2, EWSR1, FUS, SERBP1, EEF1A1 and DDX3X or DDX3Y, and with the small nuclear ribonucleoprotein-associated proteins SNRPB and SNRPN. Interacts with 'Lys-48'-linked tetra-ubiquitin, but not with monoubiquitin or 'Lys-63'-linked ubiquitin chains. May interact with the exon junction complex (EJC) composed at least of CASC3, EIF4A3, MAGOH and RBM8A. Interacts with POLR2A (via the C-terminal domain (CTD)). Probably cleaved by enteroviral 2A proteinase. In terms of tissue distribution, detected in heart, brain, placenta, lung, liver, skeletal muscle, kidney and pancreas.

Its subcellular location is the cytoplasm. The protein localises to the nucleus. Its function is as follows. Scaffolding protein that specifically recognizes and binds dimethylarginine-containing proteins. Plays a role in the regulation of translation of target mRNAs by binding Arg/Gly-rich motifs (GAR) in dimethylarginine-containing proteins. In nucleus, acts as a coactivator: recognizes and binds asymmetric dimethylation on the core histone tails associated with transcriptional activation (H3R17me2a and H4R3me2a) and recruits proteins at these arginine-methylated loci. In cytoplasm, acts as an antiviral factor that participates in the assembly of stress granules together with G3BP1. This chain is Tudor domain-containing protein 3 (TDRD3), found in Homo sapiens (Human).